We begin with the raw amino-acid sequence, 446 residues long: Probable glycine dehydrogenase (decarboxylating) subunit 1 (446 aa).

The protein belongs to the GcvP family. N-terminal subunit subfamily. In terms of assembly, the glycine cleavage system is composed of four proteins: P, T, L and H. In this organism, the P 'protein' is a heterodimer of two subunits.

It catalyses the reaction N(6)-[(R)-lipoyl]-L-lysyl-[glycine-cleavage complex H protein] + glycine + H(+) = N(6)-[(R)-S(8)-aminomethyldihydrolipoyl]-L-lysyl-[glycine-cleavage complex H protein] + CO2. The glycine cleavage system catalyzes the degradation of glycine. The P protein binds the alpha-amino group of glycine through its pyridoxal phosphate cofactor; CO(2) is released and the remaining methylamine moiety is then transferred to the lipoamide cofactor of the H protein. The polypeptide is Probable glycine dehydrogenase (decarboxylating) subunit 1 (Coxiella burnetii (strain CbuK_Q154) (Coxiella burnetii (strain Q154))).